The sequence spans 460 residues: ATP synthase subunit beta (460 aa).

Position 149-156 (149-156 (GGAGVGKT)) interacts with ATP.

The protein belongs to the ATPase alpha/beta chains family. As to quaternary structure, F-type ATPases have 2 components, CF(1) - the catalytic core - and CF(0) - the membrane proton channel. CF(1) has five subunits: alpha(3), beta(3), gamma(1), delta(1), epsilon(1). CF(0) has three main subunits: a(1), b(2) and c(9-12). The alpha and beta chains form an alternating ring which encloses part of the gamma chain. CF(1) is attached to CF(0) by a central stalk formed by the gamma and epsilon chains, while a peripheral stalk is formed by the delta and b chains.

It is found in the cell membrane. The enzyme catalyses ATP + H2O + 4 H(+)(in) = ADP + phosphate + 5 H(+)(out). In terms of biological role, produces ATP from ADP in the presence of a proton gradient across the membrane. The catalytic sites are hosted primarily by the beta subunits. The polypeptide is ATP synthase subunit beta (Acholeplasma laidlawii (strain PG-8A)).